The following is a 269-amino-acid chain: C-type lectin domain family 1 member A (269 aa).

Over 1-51 (MQAKYSSTRDMLDDDDTTISLYSGTSTVTRRAEPRHSENGTPSSVWRPVAL) the chain is Cytoplasmic. A helical; Signal-anchor for type II membrane protein transmembrane segment spans residues 52–72 (TLLTLCLVLLVGLAALGLVFF). Residues 73–269 (QFYQLSNIQQ…AGRVVPGELQ (197 aa)) lie on the Extracellular side of the membrane. Asn94, Asn126, Asn168, and Asn202 each carry an N-linked (GlcNAc...) asparagine glycan. In terms of domain architecture, C-type lectin spans 143-257 (YGDKCYQFYK…CKELRRCACE (115 aa)). 2 cysteine pairs are disulfide-bonded: Cys164/Cys256 and Cys235/Cys248.

Its subcellular location is the membrane. The sequence is that of C-type lectin domain family 1 member A (Clec1a) from Mus musculus (Mouse).